We begin with the raw amino-acid sequence, 706 residues long: B-cell lymphoma 6 protein (706 aa).

The 68-residue stretch at 32–99 (TDVVIVVSRE…MYTSRLNLRE (68 aa)) folds into the BTB domain. The tract at residues 317 to 349 (EPPNAPLNRKGLVSPQSPQKSDCQPNSPTESCS) is disordered. Positions 330-349 (SPQSPQKSDCQPNSPTESCS) are enriched in polar residues. Phosphoserine; by MAPK1 is present on residues Ser333 and Ser343. Residue Ser361 is modified to Phosphoserine. The segment at 376-379 (KKYK) is required for interaction with NuRD complex and for transcriptional repressor activity. Lys379 bears the N6-acetyllysine mark. The residue at position 404 (Ser404) is a Phosphoserine. Residues 407–467 (AYTAPPACQP…PRSSSESHSP (61 aa)) form a disordered region. Over residues 424–456 (DLQSPTKLSASGEDSTIPQASRLNNIVNRSMTG) the composition is skewed to polar residues. Residues 457–466 (SPRSSSESHS) are compositionally biased toward low complexity. C2H2-type zinc fingers lie at residues 518-541 (FFCN…LQTH), 546-568 (YKCD…KTVH), 574-596 (YRCN…TRIH), 602-624 (YKCE…VLIH), 630-652 (YPCE…LRIH), and 658-681 (YHCE…RQKH).

As to quaternary structure, homodimer. Interacts (via BTB domain) with the corepressors BCOR, NCOR1 and SMRT/NCOR2; the interactions are direct. Forms preferably ternary complexes with BCOR and SMRT/NCOR2 on target gene promoters but, on enhancer elements, interacts with SMRT/NCOR2 and HDAC3 to repress proximal gene expression. Interacts with histone deacetylases HDAC2, HDAC5 and HDAC9 (via the catalytic domain). Interacts with ZBTB7 and BCL6B. Interacts with SCF(FBXO11) complex; the interaction is independent of phosphorylation and promotes ubiquitination. Interacts (when phosphorylated) with PIN1; the interaction is required for BCL6 degradation upon genotoxic stress. Interacts with ZBTB17; inhibits ZBTB17 transcriptional activity. Interacts with CTBP1, autoinhibits its transcriptional expression. Interacts with NOTCH1 NCID and SIRT1; leads to a epigenetic repression of selective NOTCH1-target genes. Interacts (nor via BTB domain neither acetylated) with the NuRD complex components CHD4, HDAC1, MBD3 and MTA3; the interaction with MTA3 inhibits BCL6 acetylation and is required for BCL6 transpriptional repression. Phosphorylated by MAPK1 in response to antigen receptor activation at Ser-333 and Ser-343. Phosphorylated by ATM in response to genotoxic stress. Phosphorylation induces its degradation by ubiquitin/proteasome pathway. In terms of processing, polyubiquitinated. Polyubiquitinated by SCF(FBXO11), leading to its degradation by the proteasome. Ubiquitinated by the SCF(FBXL17) complex, leading to its degradation by the proteasome: ubiquitination by the SCF(FBXL17) complex takes place when aberrant BTB domain dimers are formed. Post-translationally, acetylated at Lys-379 by EP300 which inhibits the interaction with NuRD complex and the transcriptional repressor function. Deacetylated by HDAC- and SIR2-dependent pathways. Expressed in germinal center T- and B-cells and in primary immature dendritic cells.

The protein localises to the nucleus. Its function is as follows. Transcriptional repressor mainly required for germinal center (GC) formation and antibody affinity maturation which has different mechanisms of action specific to the lineage and biological functions. Forms complexes with different corepressors and histone deacetylases to repress the transcriptional expression of different subsets of target genes. Represses its target genes by binding directly to the DNA sequence 5'-TTCCTAGAA-3' (BCL6-binding site) or indirectly by repressing the transcriptional activity of transcription factors. In GC B-cells, represses genes that function in differentiation, inflammation, apoptosis and cell cycle control, also autoregulates its transcriptional expression and up-regulates, indirectly, the expression of some genes important for GC reactions, such as AICDA, through the repression of microRNAs expression, like miR155. An important function is to allow GC B-cells to proliferate very rapidly in response to T-cell dependent antigens and tolerate the physiological DNA breaks required for immunglobulin class switch recombination and somatic hypermutation without inducing a p53/TP53-dependent apoptotic response. In follicular helper CD4(+) T-cells (T(FH) cells), promotes the expression of T(FH)-related genes but inhibits the differentiation of T(H)1, T(H)2 and T(H)17 cells. Also required for the establishment and maintenance of immunological memory for both T- and B-cells. Suppresses macrophage proliferation through competition with STAT5 for STAT-binding motifs binding on certain target genes, such as CCL2 and CCND2. In response to genotoxic stress, controls cell cycle arrest in GC B-cells in both p53/TP53-dependedent and -independent manners. Besides, also controls neurogenesis through the alteration of the composition of NOTCH-dependent transcriptional complexes at selective NOTCH targets, such as HES5, including the recruitment of the deacetylase SIRT1 and resulting in an epigenetic silencing leading to neuronal differentiation. The chain is B-cell lymphoma 6 protein (BCL6) from Homo sapiens (Human).